A 279-amino-acid polypeptide reads, in one-letter code: Pantothenate synthetase (279 aa).

26 to 33 is a binding site for ATP; the sequence is MGNLHEGH. The Proton donor role is filled by His-33. Gln-57 contributes to the (R)-pantoate binding site. Gln-57 is a binding site for beta-alanine. An ATP-binding site is contributed by 144–147; it reads GKKD. Gln-150 contributes to the (R)-pantoate binding site. ATP is bound by residues Val-173 and 181-184; that span reads LSSR.

The protein belongs to the pantothenate synthetase family. Homodimer.

It is found in the cytoplasm. It catalyses the reaction (R)-pantoate + beta-alanine + ATP = (R)-pantothenate + AMP + diphosphate + H(+). The protein operates within cofactor biosynthesis; (R)-pantothenate biosynthesis; (R)-pantothenate from (R)-pantoate and beta-alanine: step 1/1. Functionally, catalyzes the condensation of pantoate with beta-alanine in an ATP-dependent reaction via a pantoyl-adenylate intermediate. The sequence is that of Pantothenate synthetase from Burkholderia thailandensis (strain ATCC 700388 / DSM 13276 / CCUG 48851 / CIP 106301 / E264).